Consider the following 162-residue polypeptide: Large ribosomal subunit protein uL10 (162 aa).

The protein belongs to the universal ribosomal protein uL10 family. In terms of assembly, part of the ribosomal stalk of the 50S ribosomal subunit. The N-terminus interacts with L11 and the large rRNA to form the base of the stalk. The C-terminus forms an elongated spine to which L12 dimers bind in a sequential fashion forming a multimeric L10(L12)X complex.

Functionally, forms part of the ribosomal stalk, playing a central role in the interaction of the ribosome with GTP-bound translation factors. The polypeptide is Large ribosomal subunit protein uL10 (Borrelia recurrentis (strain A1)).